We begin with the raw amino-acid sequence, 284 residues long: Tropomyosin (284 aa).

Residues 1–284 are a coiled coil; it reads MEAIKNKMQA…DQTFAELTGY (284 aa). Residues 22 to 43 form a disordered region; that stretch reads AEIAEQKSRDANLRAEKSEEEV.

The protein belongs to the tropomyosin family. In terms of assembly, homodimer.

Its function is as follows. Tropomyosin, in association with the troponin complex, plays a central role in the calcium dependent regulation of muscle contraction. This chain is Tropomyosin, found in Lepidoglyphus destructor (Storage mite).